Consider the following 625-residue polypeptide: tRNA uridine 5-carboxymethylaminomethyl modification enzyme MnmG (625 aa).

FAD is bound by residues 9–14 (GGGHAG), Val121, and Ser176. An NAD(+)-binding site is contributed by 270–284 (GPRYCPSIEDKIYRF). Gln367 lines the FAD pocket.

It belongs to the MnmG family. In terms of assembly, homodimer. Heterotetramer of two MnmE and two MnmG subunits. The cofactor is FAD.

The protein resides in the cytoplasm. NAD-binding protein involved in the addition of a carboxymethylaminomethyl (cmnm) group at the wobble position (U34) of certain tRNAs, forming tRNA-cmnm(5)s(2)U34. The sequence is that of tRNA uridine 5-carboxymethylaminomethyl modification enzyme MnmG from Nitratiruptor sp. (strain SB155-2).